We begin with the raw amino-acid sequence, 405 residues long: POC1 centriolar protein homolog A (405 aa).

WD repeat units follow at residues 17-56, 59-98, 101-140, 143-182, 185-224, 227-266, and 269-308; these read GHRDAVTCVDFSLNTKHLASGSMDSTLMIWHMKPQSRAYR, GHKDAVTCVNFSPSGHLLASGSRDKTVRIWVPNVKGESTV, AHTATVRSVHFCSDGQSLVTASDDKTVKVWSTHRQRFLFS, QHINWVRCAKFSPDGRLIVSASDDKTVKLWDKTSRECIHS, EHGGFVTYVDFHPSGTCIAAAGMDNTVKVWDARTHRLLQH, LHSAAVNALSFHPSGNYLITASSDSTLKILDLMEGRLLYT, and GHQGPATTVAFSRTGEYFASGGSDEQVMVWKSNFDIVDYG. Residues 313–352 are disordered; that stretch reads RRPPPLTSSSGTLPKMDLPVPPGRDRSLESVQGEPQESIS. A compositionally biased stretch (polar residues) spans 341–352; the sequence is ESVQGEPQESIS. Residues 367 to 395 are a coiled coil; the sequence is QLDILTQTVSILEQRLTLTEDRLKQCLEN.

The protein belongs to the WD repeat POC1 family. Interacts with POC1B. As to expression, widely expressed in embryonic and adult tissues.

It localises to the cytoplasm. Its subcellular location is the cytoskeleton. The protein resides in the microtubule organizing center. The protein localises to the centrosome. It is found in the centriole. It localises to the cilium basal body. Its subcellular location is the spindle pole. Functionally, plays an important role in centriole assembly and/or stability and ciliogenesis. Involved in early steps of centriole duplication, as well as in the later steps of centriole length control. Acts in concert with POC1B to ensure centriole integrity and proper mitotic spindle formation. This is POC1 centriolar protein homolog A (Poc1a) from Mus musculus (Mouse).